The chain runs to 416 residues: Tumor necrosis factor receptor superfamily member 19 (416 aa).

The first 29 residues, 1 to 29 (MALKVLPLHRTVLFAAILFLLHLACKVSC), serve as a signal peptide directing secretion. Topologically, residues 30-170 (ETGDCRQQEF…TVSSPRDTAL (141 aa)) are extracellular. TNFR-Cys repeat units lie at residues 33–72 (DCRQ…DAQC) and 74–114 (PCRP…DAVC). 8 disulfides stabilise this stretch: Cys-34–Cys-46, Cys-49–Cys-62, Cys-52–Cys-72, Cys-75–Cys-89, Cys-92–Cys-106, Cys-95–Cys-114, Cys-117–Cys-135, and Cys-138–Cys-149. N-linked (GlcNAc...) asparagine glycosylation is present at Asn-105. A TNFR-Cys 3; truncated repeat occupies 116–149 (DCLPGFYRKTKLVGFQDMECVPCGDPPPPYEPHC). A helical transmembrane segment spans residues 171-191 (AAVICSALATVLLALLILCVI). Residues 192–416 (YCKRQFMEKK…LAMPTAFQDA (225 aa)) are Cytoplasmic-facing. The interval 321 to 416 (LCDSYPELTG…LAMPTAFQDA (96 aa)) is disordered. Polar residues-rich tracts occupy residues 331 to 351 (EDTN…SSGG), 360 to 370 (LESSGNVSEST), and 381 to 396 (VWEQ…TPSQ).

Associates with TRAF1, TRAF2, TRAF3 and TRAF5. Interacts with LINGO1. In terms of tissue distribution, highly expressed in adult brain, and in embryos from day 11-17, but not earlier. Detected in embryonic brain and epithelium, and at lower levels in adult heart, lung and liver. In neonatal mice, mainly in hair follicles and neuron-like cells in the cerebellum, but not in the skin epidermis. Isoform 3 was found in embryonic day 17.5 skin but not in brain and liver.

The protein resides in the cell membrane. Its subcellular location is the secreted. Can mediate activation of c-Jun and NF-kappa-B. May promote caspase-independent cell death. Isoform 2 and isoform 3 may act as decoy receptors. The polypeptide is Tumor necrosis factor receptor superfamily member 19 (Tnfrsf19) (Mus musculus (Mouse)).